The primary structure comprises 333 residues: Mitochondrial glycine transporter (333 aa).

Residues 1-25 (MTNAATDKSVASVARDVSTGKPGKS) are disordered. Solcar repeat units lie at residues 26–109 (PDAA…MRAA), 127–220 (LLPM…FKND), and 236–319 (RSSV…LIKS). Transmembrane regions (helical) follow at residues 32 to 57 (LLSG…TRLQ), 84 to 110 (GAVP…RAAV), 133 to 158 (LATG…TRFE), 195 to 218 (GSVA…EGFK), 240 to 266 (INSS…KTRL), and 294 to 312 (GLSL…SWCI).

The protein belongs to the mitochondrial carrier (TC 2.A.29) family. SLC25A38 subfamily.

It localises to the mitochondrion inner membrane. It catalyses the reaction glycine(in) = glycine(out). Its function is as follows. Mitochondrial glycine transporter that imports glycine into the mitochondrial matrix. Plays an important role in providing glycine for the first enzymatic step in heme biosynthesis, the condensation of glycine with succinyl-CoA to produce 5-aminolevulinate (ALA) in the mitochondrial matrix. The chain is Mitochondrial glycine transporter from Scheffersomyces stipitis (strain ATCC 58785 / CBS 6054 / NBRC 10063 / NRRL Y-11545) (Yeast).